The primary structure comprises 112 residues: Putative pterin-4-alpha-carbinolamine dehydratase (112 aa).

It belongs to the pterin-4-alpha-carbinolamine dehydratase family.

The enzyme catalyses (4aS,6R)-4a-hydroxy-L-erythro-5,6,7,8-tetrahydrobiopterin = (6R)-L-erythro-6,7-dihydrobiopterin + H2O. The chain is Putative pterin-4-alpha-carbinolamine dehydratase from Shewanella woodyi (strain ATCC 51908 / MS32).